The following is a 122-amino-acid chain: MIQQESRLKVADNTGAKEILCIRVLGGSSRRYAGIGDVIVATVKDAIPGGNVKRGDVVKAVVVRTVKERRRADGSYIKFDENAAVIIKNDNDPRGTRIFGPVGRELREKKFMKIVSLAPEVL.

This sequence belongs to the universal ribosomal protein uL14 family. Part of the 50S ribosomal subunit. Forms a cluster with proteins L3 and L19. In the 70S ribosome, L14 and L19 interact and together make contacts with the 16S rRNA in bridges B5 and B8.

Its function is as follows. Binds to 23S rRNA. Forms part of two intersubunit bridges in the 70S ribosome. This chain is Large ribosomal subunit protein uL14, found in Mycolicibacterium smegmatis (strain ATCC 700084 / mc(2)155) (Mycobacterium smegmatis).